The primary structure comprises 393 residues: Telomeric repeat-binding factor 2-interacting protein 1 (393 aa).

Alanine 2 is modified (N-acetylalanine). In terms of domain architecture, BRCT spans 10 to 101 (DPNGPTHSST…EKLELEAYRL (92 aa)). Phosphoserine is present on residues serine 36 and serine 43. A disordered region spans residues 104 to 132 (TEQASDPKPGASAEGSTEPEPQPLTGRIA). A Glycyl lysine isopeptide (Lys-Gly) (interchain with G-Cter in SUMO2) cross-link involves residue lysine 111. Positions 125–185 (QPLTGRIAYT…SLKDRYLKHL (61 aa)) constitute a Myb-like domain. Residues serine 151 and serine 153 each carry the phosphoserine modification. A Glycyl lysine isopeptide (Lys-Gly) (interchain with G-Cter in SUMO2) cross-link involves residue lysine 191. Disordered regions lie at residues 194–248 (LGNA…EADN) and 272–305 (HITM…TQEV). Phosphoserine occurs at positions 200 and 203. Glycyl lysine isopeptide (Lys-Gly) (interchain with G-Cter in SUMO2) cross-links involve residues lysine 205, lysine 209, and lysine 237. Basic and acidic residues predominate over residues 223 to 248 (QNKRTPDLPEEECVKGETKENGEADN). Over residues 282-297 (TPEEDSETQPDEEEEE) the composition is skewed to acidic residues. Lysine 366 is covalently cross-linked (Glycyl lysine isopeptide (Lys-Gly) (interchain with G-Cter in SUMO2)). Residues 377-393 (KKYGAQNVARRIEFRKK) carry the Nuclear localization signal motif.

The protein belongs to the RAP1 family. Associates with the I-kappa-B-kinase (IKK) core complex, composed of CHUK, IKBKB and IKBKG. Homodimer. Component of the shelterin complex (telosome) composed of TERF1, TERF2, TINF2, TERF2IP ACD and POT1. Interacts with TERF2 (but not TERF1) with its C-terminus. Interacts with SLX4/BTBD12. Interacts with TERF2; the interaction is direct.

It is found in the nucleus. The protein resides in the cytoplasm. Its subcellular location is the chromosome. It localises to the telomere. In terms of biological role, acts both as a regulator of telomere function and as a transcription regulator. Involved in the regulation of telomere length and protection as a component of the shelterin complex (telosome). In contrast to other components of the shelterin complex, it is dispensible for telomere capping and does not participate in the protection of telomeres against non-homologous end-joining (NHEJ)-mediated repair. Instead, it is required to negatively regulate telomere recombination and is essential for repressing homology-directed repair (HDR), which can affect telomere length. Does not bind DNA directly: recruited to telomeric double-stranded 5'-TTAGGG-3' repeats via its interaction with TERF2. Independently of its function in telomeres, also acts as a transcription regulator: recruited to extratelomeric 5'-TTAGGG-3' sites via its association with TERF2 or other factors, and regulates gene expression. When cytoplasmic, associates with the I-kappa-B-kinase (IKK) complex and acts as a regulator of the NF-kappa-B signaling by promoting IKK-mediated phosphorylation of RELA/p65, leading to activate expression of NF-kappa-B target genes. This Rattus norvegicus (Rat) protein is Telomeric repeat-binding factor 2-interacting protein 1 (Terf2ip).